The sequence spans 331 residues: tRNA-cytidine(32) 2-sulfurtransferase (331 aa).

The disordered stretch occupies residues 1–33; it reads MNAPHMNDTAADAATLDDAAAPAGRPALTRREQ. The span at 8–23 shows a compositional bias: low complexity; it reads DTAADAATLDDAAAPA. The PP-loop motif signature appears at 71-76; that stretch reads SGGKDS. [4Fe-4S] cluster-binding residues include Cys146, Cys149, and Cys237.

The protein belongs to the TtcA family. As to quaternary structure, homodimer. The cofactor is Mg(2+). Requires [4Fe-4S] cluster as cofactor.

Its subcellular location is the cytoplasm. The catalysed reaction is cytidine(32) in tRNA + S-sulfanyl-L-cysteinyl-[cysteine desulfurase] + AH2 + ATP = 2-thiocytidine(32) in tRNA + L-cysteinyl-[cysteine desulfurase] + A + AMP + diphosphate + H(+). It participates in tRNA modification. Catalyzes the ATP-dependent 2-thiolation of cytidine in position 32 of tRNA, to form 2-thiocytidine (s(2)C32). The sulfur atoms are provided by the cysteine/cysteine desulfurase (IscS) system. The chain is tRNA-cytidine(32) 2-sulfurtransferase from Burkholderia cenocepacia (strain HI2424).